The following is a 195-amino-acid chain: Pyruvoyl-dependent arginine decarboxylase AaxB (195 aa).

Ser-53 carries the post-translational modification Pyruvic acid (Ser).

The protein belongs to the pyruvoyl-dependent arginine decarboxylase family. In terms of assembly, trimer of an alpha-beta dimer. It depends on pyruvate as a cofactor.

Its subcellular location is the cytoplasm. The catalysed reaction is L-arginine + H(+) = agmatine + CO2. Part of the AaxABC system, catalyzes the decarboxylation of L-arginine. The arginine uptake by the bacterium in the macrophage may be a virulence factor against the host innate immune response. This chain is Pyruvoyl-dependent arginine decarboxylase AaxB (aaxB), found in Chlamydia abortus (strain DSM 27085 / S26/3) (Chlamydophila abortus).